A 335-amino-acid polypeptide reads, in one-letter code: BTB and MATH domain-containing protein 39 (335 aa).

One can recognise an MATH domain in the interval 14–141; the sequence is MKTLCFKIMN…NGVFTIEFDL (128 aa). The region spanning 161–226 is the BTB domain; sequence ADGKLIVEDQ…LQLDEFKVNV (66 aa).

This Caenorhabditis briggsae protein is BTB and MATH domain-containing protein 39.